Consider the following 946-residue polypeptide: RIPOR family member 3 (946 aa).

Phosphoserine is present on residues serine 9, serine 24, and serine 340. Threonine 345 bears the Phosphothreonine mark. Residues serine 351 and serine 384 each carry the phosphoserine modification. Residues 390–512 are disordered; it reads GPSLRSQSQE…GDREDGPGVA (123 aa). A compositionally biased stretch (basic and acidic residues) spans 437–446; the sequence is SIEEEAREDP. Residues 478 to 495 are compositionally biased toward polar residues; the sequence is SLPQGSLFHSGTASSSQN. Basic and acidic residues predominate over residues 496 to 508; sequence GHEEGATGDREDG.

Belongs to the RIPOR family.

This Homo sapiens (Human) protein is RIPOR family member 3.